The sequence spans 562 residues: DNA ligase (562 aa).

Glu-252 contributes to the ATP binding site. Catalysis depends on Lys-254, which acts as the N6-AMP-lysine intermediate. Positions 259, 274, 303, 343, 419, and 425 each coordinate ATP.

Belongs to the ATP-dependent DNA ligase family. Requires Mg(2+) as cofactor.

The enzyme catalyses ATP + (deoxyribonucleotide)n-3'-hydroxyl + 5'-phospho-(deoxyribonucleotide)m = (deoxyribonucleotide)n+m + AMP + diphosphate.. Its function is as follows. DNA ligase that seals nicks in double-stranded DNA during DNA replication, DNA recombination and DNA repair. The polypeptide is DNA ligase (Methanococcus aeolicus (strain ATCC BAA-1280 / DSM 17508 / OCM 812 / Nankai-3)).